The sequence spans 110 residues: uncharacterized protein (110 aa).

The helical transmembrane segment at 18–34 threads the bilayer; that stretch reads MFPLISTFTSIGLGVLM.

The protein resides in the membrane. This is an uncharacterized protein from Saccharomyces cerevisiae (strain ATCC 204508 / S288c) (Baker's yeast).